The following is a 166-amino-acid chain: Ribonuclease H2 subunit C (166 aa).

M1 bears the N-acetylmethionine mark.

This sequence belongs to the RNase H2 subunit C family. The RNase H2 complex is a heterotrimer composed of the catalytic subunit RNASEH2A and the non-catalytic subunits RNASEH2B and RNASEH2C.

Its subcellular location is the nucleus. In terms of biological role, non catalytic subunit of RNase H2, an endonuclease that specifically degrades the RNA of RNA:DNA hybrids. Participates in DNA replication, possibly by mediating the removal of lagging-strand Okazaki fragment RNA primers during DNA replication. Mediates the excision of single ribonucleotides from DNA:RNA duplexes. This is Ribonuclease H2 subunit C (Rnaseh2c) from Mus musculus (Mouse).